Here is a 161-residue protein sequence, read N- to C-terminus: Nucleotide-binding protein Bcep18194_A5887 (161 aa).

Belongs to the YajQ family.

Its function is as follows. Nucleotide-binding protein. This chain is Nucleotide-binding protein Bcep18194_A5887, found in Burkholderia lata (strain ATCC 17760 / DSM 23089 / LMG 22485 / NCIMB 9086 / R18194 / 383).